The sequence spans 559 residues: Nuclear envelope integral membrane protein (559 aa).

An N-terminal signal peptide occupies residues 1 to 15 (MRLLTLALLVAGSLA). 3 N-linked (GlcNAc...) asparagine glycosylation sites follow: asparagine 67, asparagine 81, and asparagine 114. The next 5 membrane-spanning stretches (helical) occupy residues 164 to 184 (YTSG…FIVW), 192 to 212 (IGVP…HFAW), 218 to 238 (IMIE…LISM), 267 to 287 (LIYF…ALII), and 290 to 310 (ICRG…KAVW). Asparagine 408 and asparagine 465 each carry an N-linked (GlcNAc...) asparagine glycan. 2 disordered regions span residues 475-494 (RRDS…PRMP) and 510-559 (KNGR…DADE). Over residues 517–526 (PSSSTASGMT) the composition is skewed to polar residues. Over residues 530–539 (YMRKARRIDA) the composition is skewed to basic and acidic residues.

This sequence belongs to the NEMP family.

It localises to the nucleus inner membrane. Contributes to nuclear envelope stiffness in germ cells. Required for fertility. The chain is Nuclear envelope integral membrane protein from Caenorhabditis elegans.